We begin with the raw amino-acid sequence, 265 residues long: Undecaprenyl-diphosphatase (265 aa).

Transmembrane regions (helical) follow at residues Gly-14–Phe-34, Ser-40–Trp-60, Gly-79–Phe-99, Leu-112–Ala-132, Met-141–Ile-161, Ala-182–Leu-202, Ile-217–Val-237, and Phe-242–Leu-262.

Belongs to the UppP family.

It is found in the cell membrane. It catalyses the reaction di-trans,octa-cis-undecaprenyl diphosphate + H2O = di-trans,octa-cis-undecaprenyl phosphate + phosphate + H(+). In terms of biological role, catalyzes the dephosphorylation of undecaprenyl diphosphate (UPP). Confers resistance to bacitracin. The protein is Undecaprenyl-diphosphatase of Caldicellulosiruptor bescii (strain ATCC BAA-1888 / DSM 6725 / KCTC 15123 / Z-1320) (Anaerocellum thermophilum).